A 343-amino-acid polypeptide reads, in one-letter code: 3-hydroxy-3-methylglutaryl-CoA lyase, cytoplasmic (343 aa).

G2 carries the N-myristoyl glycine lipid modification. Residues 48 to 315 form the Pyruvate carboxyltransferase domain; the sequence is VKIVEVGPRD…NTGVDLYKVM (268 aa). Residue R56 participates in substrate binding. Positions 57, 248, and 250 each coordinate a divalent metal cation. C281 is an active-site residue. N290 serves as a coordination point for a divalent metal cation.

The protein belongs to the HMG-CoA lyase family. A divalent metal cation serves as cofactor.

It is found in the cytoplasm. Its subcellular location is the cytosol. The protein localises to the endoplasmic reticulum membrane. The catalysed reaction is (3S)-3-hydroxy-3-methylglutaryl-CoA = acetoacetate + acetyl-CoA. The protein operates within metabolic intermediate metabolism; (S)-3-hydroxy-3-methylglutaryl-CoA degradation; acetoacetate from (S)-3-hydroxy-3-methylglutaryl-CoA: step 1/1. Functionally, non-mitochondrial 3-hydroxy-3-methylglutaryl-CoA lyase that catalyzes a cation-dependent cleavage of (S)-3-hydroxy-3-methylglutaryl-CoA into acetyl-CoA and acetoacetate, a key step in ketogenesis, the products of which support energy production in nonhepatic animal tissues. The protein is 3-hydroxy-3-methylglutaryl-CoA lyase, cytoplasmic (Hmgcll1) of Mus musculus (Mouse).